A 104-amino-acid chain; its full sequence is Flagellar hook-basal body complex protein FliE (104 aa).

The protein belongs to the FliE family.

It localises to the bacterial flagellum basal body. This chain is Flagellar hook-basal body complex protein FliE, found in Salmonella agona (strain SL483).